The primary structure comprises 268 residues: 3-deoxy-manno-octulosonate cytidylyltransferase (268 aa).

Belongs to the KdsB family.

Its subcellular location is the cytoplasm. The catalysed reaction is 3-deoxy-alpha-D-manno-oct-2-ulosonate + CTP = CMP-3-deoxy-beta-D-manno-octulosonate + diphosphate. Its pathway is nucleotide-sugar biosynthesis; CMP-3-deoxy-D-manno-octulosonate biosynthesis; CMP-3-deoxy-D-manno-octulosonate from 3-deoxy-D-manno-octulosonate and CTP: step 1/1. The protein operates within bacterial outer membrane biogenesis; lipopolysaccharide biosynthesis. In terms of biological role, activates KDO (a required 8-carbon sugar) for incorporation into bacterial lipopolysaccharide in Gram-negative bacteria. The sequence is that of 3-deoxy-manno-octulosonate cytidylyltransferase from Psychrobacter cryohalolentis (strain ATCC BAA-1226 / DSM 17306 / VKM B-2378 / K5).